The sequence spans 210 residues: LexA repressor (210 aa).

Residues 28-48 constitute a DNA-binding region (H-T-H motif); that stretch reads FEEIAEGMGLSSLATVHKHIG. Active-site for autocatalytic cleavage activity residues include Ser-131 and Lys-169.

It belongs to the peptidase S24 family. As to quaternary structure, homodimer.

It catalyses the reaction Hydrolysis of Ala-|-Gly bond in repressor LexA.. In terms of biological role, represses a number of genes involved in the response to DNA damage (SOS response), including recA and lexA. In the presence of single-stranded DNA, RecA interacts with LexA causing an autocatalytic cleavage which disrupts the DNA-binding part of LexA, leading to derepression of the SOS regulon and eventually DNA repair. The chain is LexA repressor from Koribacter versatilis (strain Ellin345).